Reading from the N-terminus, the 398-residue chain is Lipase member K (398 aa).

Positions 1–19 are cleaved as a signal peptide; sequence MWWLLATTCCVLLSGPIDG. Positions 78–377 constitute an AB hydrolase-1 domain; that stretch reads VVYLQHGLIA…HYNHMDFYLG (300 aa). Ser171 acts as the Nucleophile in catalysis. Cys245 and Cys254 are joined by a disulfide. N-linked (GlcNAc...) asparagine glycosylation is found at Asn270 and Asn326. Active-site charge relay system residues include Asp342 and His371.

The protein belongs to the AB hydrolase superfamily. Lipase family.

The protein resides in the secreted. Functionally, plays a highly specific role in the last step of keratinocyte differentiation. May have an essential function in lipid metabolism of the most differentiated epidermal layers. This is Lipase member K (Lipk) from Mus musculus (Mouse).